The chain runs to 29 residues: Cliotide T18 (29 aa).

The cyclopeptide (Gly-Asn) cross-link spans 1–29; the sequence is GLPICGETCFTGTCYTPGCTCSYPVCKKN. 3 disulfides stabilise this stretch: C5/C19, C9/C21, and C14/C26.

In terms of processing, contains 3 disulfide bonds. Post-translationally, this is a cyclic peptide. Expressed in root nodules but not in seed.

Probably participates in a plant defense mechanism. This is Cliotide T18 from Clitoria ternatea (Butterfly pea).